The following is a 549-amino-acid chain: Glucose-6-phosphate isomerase (549 aa).

The active-site Proton donor is Glu-355. Active-site residues include His-387 and Lys-515.

The protein belongs to the GPI family.

It is found in the cytoplasm. It catalyses the reaction alpha-D-glucose 6-phosphate = beta-D-fructose 6-phosphate. It functions in the pathway carbohydrate biosynthesis; gluconeogenesis. The protein operates within carbohydrate degradation; glycolysis; D-glyceraldehyde 3-phosphate and glycerone phosphate from D-glucose: step 2/4. Functionally, catalyzes the reversible isomerization of glucose-6-phosphate to fructose-6-phosphate. The protein is Glucose-6-phosphate isomerase of Haemophilus influenzae (strain PittEE).